We begin with the raw amino-acid sequence, 364 residues long: Aminomethyltransferase (364 aa).

Belongs to the GcvT family. As to quaternary structure, the glycine cleavage system is composed of four proteins: P, T, L and H.

It carries out the reaction N(6)-[(R)-S(8)-aminomethyldihydrolipoyl]-L-lysyl-[protein] + (6S)-5,6,7,8-tetrahydrofolate = N(6)-[(R)-dihydrolipoyl]-L-lysyl-[protein] + (6R)-5,10-methylene-5,6,7,8-tetrahydrofolate + NH4(+). Its function is as follows. The glycine cleavage system catalyzes the degradation of glycine. The polypeptide is Aminomethyltransferase (Shewanella baltica (strain OS155 / ATCC BAA-1091)).